Reading from the N-terminus, the 208-residue chain is MLKTIQKHGVTLAVFAALTTGLTAMVNALTKTTIEGQAALQQKQLFDQVLPPEMYDNDIQQSCYLVSAPALGRGEKQLWVARKGDTPVAVVMQATAPDGYSGAIQLLVGADFKGTVLGTRVTEHHETPGLGDKIETRISDWITGFAGQVIHGPNDTRWAVKKDGGQFDQFTGATITPRAVVNAVKRAGLYAQTLEPQLSTLPSCGENP.

The helical transmembrane segment at 9–29 threads the bilayer; it reads GVTLAVFAALTTGLTAMVNAL. Position 174 is an FMN phosphoryl threonine (threonine 174).

Belongs to the RnfG family. In terms of assembly, the complex is composed of six subunits: RnfA, RnfB, RnfC, RnfD, RnfE and RnfG. The cofactor is FMN.

Its subcellular location is the cell inner membrane. Functionally, part of a membrane-bound complex that couples electron transfer with translocation of ions across the membrane. This chain is Ion-translocating oxidoreductase complex subunit G, found in Cronobacter sakazakii (strain ATCC BAA-894) (Enterobacter sakazakii).